A 308-amino-acid polypeptide reads, in one-letter code: Putative hydrolase MT0526 (308 aa).

The segment at methionine 1–aspartate 48 is disordered. Catalysis depends on aspartate 62, which acts as the Nucleophile. Residues aspartate 62, aspartate 64, and aspartate 237 each coordinate Mg(2+). Residue aspartate 64 is the Proton donor of the active site.

Belongs to the HAD-like hydrolase superfamily. SerB family. Mg(2+) is required as a cofactor.

This Mycobacterium tuberculosis (strain CDC 1551 / Oshkosh) protein is Putative hydrolase MT0526.